The following is a 206-amino-acid chain: Imidazoleglycerol-phosphate dehydratase (206 aa).

Belongs to the imidazoleglycerol-phosphate dehydratase family.

It localises to the cytoplasm. It carries out the reaction D-erythro-1-(imidazol-4-yl)glycerol 3-phosphate = 3-(imidazol-4-yl)-2-oxopropyl phosphate + H2O. The protein operates within amino-acid biosynthesis; L-histidine biosynthesis; L-histidine from 5-phospho-alpha-D-ribose 1-diphosphate: step 6/9. This is Imidazoleglycerol-phosphate dehydratase from Saccharopolyspora erythraea (strain ATCC 11635 / DSM 40517 / JCM 4748 / NBRC 13426 / NCIMB 8594 / NRRL 2338).